We begin with the raw amino-acid sequence, 249 residues long: DNA repair protein RecO (249 aa).

The protein belongs to the RecO family.

Functionally, involved in DNA repair and RecF pathway recombination. This chain is DNA repair protein RecO, found in Lawsonia intracellularis (strain PHE/MN1-00).